A 436-amino-acid chain; its full sequence is MAATMAVTTMVTRSKESWSSLQVPAVAFPWKPRGGKTGGLEFPRRAMFASVGLNVCPGVPAGRDPREPDPKVVRAADNCDIAASLAPPFPGSRPPGRRGRGSEEEEAEGRRHEEAAAAGRSEPEEGQGQDRQPAPARLVSGAIAGAVSRTFVAPLETIRTHLMVGSIGVDSMAGVFQWIMQNEGWTGLFRGNAVNVLRVAPSKAIEHFTYDTAKKFLTPKGDEPPKIPIPTPLVAGALAGFASTLCTYPMELIKTRVTIEKDVYDNVAHAFVKILRDEGPSELYRGLTPSLIGVVPYAACNFYAYETLKRLYRRATGRRPGADVGPVATLLIGSAAGAIASSATFPLEVARKQMQVGAVGGRQVYQNVLHAIYCILKKEGAGGLYRGLGPSCIKLMPAAGIAFMCYEACKKILVDKEDEEEEDEAGGGEDDKKKVE.

Residues 83-135 are disordered; it reads ASLAPPFPGSRPPGRRGRGSEEEEAEGRRHEEAAAAGRSEPEEGQGQDRQPAP. 3 Solcar repeats span residues 132–216, 227–311, and 324–412; these read QPAP…AKKF, IPIP…LKRL, and VGPV…CKKI. Helical transmembrane passes span 137-158, 193-213, 229-247, 290-310, 327-347, and 384-405; these read RLVSGAIAGAVSRTFVAPLETI, AVNVLRVAPSKAIEHFTYDTA, IPTPLVAGALAGFASTLCT, SLIGVVPYAACNFYAYETLKR, VATLLIGSAAGAIASSATFPL, and LYRGLGPSCIKLMPAAGIAFMC. Positions 417 to 428 are enriched in acidic residues; the sequence is EDEEEEDEAGGG. The tract at residues 417–436 is disordered; it reads EDEEEEDEAGGGEDDKKKVE.

Belongs to the mitochondrial carrier (TC 2.A.29) family. In terms of tissue distribution, highly expressed in silks and endosperm of developing kernels. Expressed at intermediate levels in tassels and lower levels in stems and leaves.

It is found in the plastid. The protein localises to the chloroplast inner membrane. Its subcellular location is the amyloplast inner membrane. It localises to the mitochondrion inner membrane. With respect to regulation, inhibited by mersalyl. Its function is as follows. Probable adenylate translocator that mediates transport of ADP-glucose into endosperm storage plastids during starch synthesis. Transports cytosolic ADP-glucose to amyloplast stroma by counter-exchange with ADP. The protein is Adenine nucleotide transporter BT1, chloroplastic/amyloplastic/mitochondrial (BT1) of Zea mays (Maize).